We begin with the raw amino-acid sequence, 232 residues long: Phosphatidylserine decarboxylase proenzyme (232 aa).

The Schiff-base intermediate with substrate; via pyruvic acid role is filled by Ser190. A Pyruvic acid (Ser); by autocatalysis modification is found at Ser190.

This sequence belongs to the phosphatidylserine decarboxylase family. PSD-A subfamily. As to quaternary structure, heterodimer of a large membrane-associated beta subunit and a small pyruvoyl-containing alpha subunit. It depends on pyruvate as a cofactor. Is synthesized initially as an inactive proenzyme. Formation of the active enzyme involves a self-maturation process in which the active site pyruvoyl group is generated from an internal serine residue via an autocatalytic post-translational modification. Two non-identical subunits are generated from the proenzyme in this reaction, and the pyruvate is formed at the N-terminus of the alpha chain, which is derived from the carboxyl end of the proenzyme. The post-translation cleavage follows an unusual pathway, termed non-hydrolytic serinolysis, in which the side chain hydroxyl group of the serine supplies its oxygen atom to form the C-terminus of the beta chain, while the remainder of the serine residue undergoes an oxidative deamination to produce ammonia and the pyruvoyl prosthetic group on the alpha chain.

The protein resides in the cell membrane. It catalyses the reaction a 1,2-diacyl-sn-glycero-3-phospho-L-serine + H(+) = a 1,2-diacyl-sn-glycero-3-phosphoethanolamine + CO2. It participates in phospholipid metabolism; phosphatidylethanolamine biosynthesis; phosphatidylethanolamine from CDP-diacylglycerol: step 2/2. In terms of biological role, catalyzes the formation of phosphatidylethanolamine (PtdEtn) from phosphatidylserine (PtdSer). In Mesorhizobium japonicum (strain LMG 29417 / CECT 9101 / MAFF 303099) (Mesorhizobium loti (strain MAFF 303099)), this protein is Phosphatidylserine decarboxylase proenzyme.